A 510-amino-acid polypeptide reads, in one-letter code: NAD(P)H-quinone oxidoreductase subunit 2, chloroplastic (510 aa).

The next 12 membrane-spanning stretches (helical) occupy residues 24–44, 59–79, 99–119, 124–144, 149–169, 183–203, 229–249, 295–315, 323–343, 347–367, 395–415, and 418–438; these read LLLF…GLIL, WFYF…LFRW, IFQF…VEYI, MAIT…MFLC, LITI…LSGY, YLLM…WLYG, ISIA…PAPF, WHLL…LIAI, MLAY…IVGD, GYAS…GTFA, ALSS…AGFF, and LHLF…IGLL.

Belongs to the complex I subunit 2 family. In terms of assembly, NDH is composed of at least 16 different subunits, 5 of which are encoded in the nucleus.

The protein localises to the plastid. The protein resides in the chloroplast thylakoid membrane. It catalyses the reaction a plastoquinone + NADH + (n+1) H(+)(in) = a plastoquinol + NAD(+) + n H(+)(out). The catalysed reaction is a plastoquinone + NADPH + (n+1) H(+)(in) = a plastoquinol + NADP(+) + n H(+)(out). Its function is as follows. NDH shuttles electrons from NAD(P)H:plastoquinone, via FMN and iron-sulfur (Fe-S) centers, to quinones in the photosynthetic chain and possibly in a chloroplast respiratory chain. The immediate electron acceptor for the enzyme in this species is believed to be plastoquinone. Couples the redox reaction to proton translocation, and thus conserves the redox energy in a proton gradient. This Allium textile (Textile onion) protein is NAD(P)H-quinone oxidoreductase subunit 2, chloroplastic.